Reading from the N-terminus, the 166-residue chain is Chorion protein S18 (166 aa).

The signal sequence occupies residues 1–17 (MMKFMCLFVCAIAAVSA).

This sequence belongs to the chorion protein S15/S18 family.

It localises to the secreted. Functionally, chorion membrane (egg shell) protein; plays a role in protecting the egg from the environment. The chain is Chorion protein S18 (Cp18) from Drosophila grimshawi (Hawaiian fruit fly).